The sequence spans 188 residues: Surfactant protein C (188 aa).

Residues M1 to R23 constitute a propeptide that is removed on maturation. S-palmitoyl cysteine attachment occurs at residues C28 and C29. A propeptide spanning residues H59–I188 is cleaved from the precursor. Residues F94–I188 form the BRICHOS domain. Cysteines 121 and 180 form a disulfide. The disordered stretch occupies residues N144–S164.

It is found in the secreted. It localises to the extracellular space. Its subcellular location is the surface film. Its function is as follows. Pulmonary surfactant associated proteins promote alveolar stability by lowering the surface tension at the air-liquid interface in the peripheral air spaces. The sequence is that of Surfactant protein C (SFTPC) from Oryctolagus cuniculus (Rabbit).